The primary structure comprises 369 residues: Coiled-coil domain-containing protein 149 (369 aa).

A coiled-coil region spans residues 1 to 249 (MKENNNAEIL…AKYKQMAEAV (249 aa)).

This sequence belongs to the CCDC149 family. As to expression, expressed in amphid and phasmid ciliated neurons, and also pharyngeal, touch receptor and motor neurons.

It localises to the cell projection. The protein resides in the cilium. The protein is Coiled-coil domain-containing protein 149 of Caenorhabditis elegans.